Consider the following 149-residue polypeptide: Transcriptional repressor NrdR (149 aa).

Residues 3 to 34 fold into a zinc finger; it reads CPFCSHSETQVVETRISEDGDSIRRRRQCASC. One can recognise an ATP-cone domain in the interval 49-139; sequence PAIVKKDGRR…VYRSFEDIDE (91 aa).

Belongs to the NrdR family. The cofactor is Zn(2+).

In terms of biological role, negatively regulates transcription of bacterial ribonucleotide reductase nrd genes and operons by binding to NrdR-boxes. The polypeptide is Transcriptional repressor NrdR (Albidiferax ferrireducens (strain ATCC BAA-621 / DSM 15236 / T118) (Rhodoferax ferrireducens)).